The sequence spans 142 residues: Large ribosomal subunit protein uL11 (142 aa).

The protein belongs to the universal ribosomal protein uL11 family. Part of the ribosomal stalk of the 50S ribosomal subunit. Interacts with L10 and the large rRNA to form the base of the stalk. L10 forms an elongated spine to which L12 dimers bind in a sequential fashion forming a multimeric L10(L12)X complex. In terms of processing, one or more lysine residues are methylated.

Functionally, forms part of the ribosomal stalk which helps the ribosome interact with GTP-bound translation factors. The polypeptide is Large ribosomal subunit protein uL11 (Vibrio cholerae serotype O1 (strain ATCC 39541 / Classical Ogawa 395 / O395)).